Here is a 102-residue protein sequence, read N- to C-terminus: Small ribosomal subunit protein uS10 (102 aa).

The protein belongs to the universal ribosomal protein uS10 family. As to quaternary structure, part of the 30S ribosomal subunit.

Its function is as follows. Involved in the binding of tRNA to the ribosomes. In Levilactobacillus brevis (strain ATCC 367 / BCRC 12310 / CIP 105137 / JCM 1170 / LMG 11437 / NCIMB 947 / NCTC 947) (Lactobacillus brevis), this protein is Small ribosomal subunit protein uS10.